A 126-amino-acid polypeptide reads, in one-letter code: Large-conductance mechanosensitive channel (126 aa).

A run of 3 helical transmembrane segments spans residues 14–34 (VIDLAIGVIIGGAFGKIVTSL), 40–60 (MPLLGLLLGGLDFSALSFTFV), and 67–87 (GLFIQSIVNFFIISFSIFLFI).

The protein belongs to the MscL family. Homopentamer.

The protein resides in the cell membrane. Channel that opens in response to stretch forces in the membrane lipid bilayer. May participate in the regulation of osmotic pressure changes within the cell. This Bacillus licheniformis (strain ATCC 14580 / DSM 13 / JCM 2505 / CCUG 7422 / NBRC 12200 / NCIMB 9375 / NCTC 10341 / NRRL NRS-1264 / Gibson 46) protein is Large-conductance mechanosensitive channel.